The chain runs to 618 residues: Dihydroxy-acid dehydratase 1 (618 aa).

Residue Asp81 participates in Mg(2+) binding. Cys122 is a binding site for [2Fe-2S] cluster. Residues Asp123 and Lys124 each contribute to the Mg(2+) site. At Lys124 the chain carries N6-carboxylysine. Cys195 lines the [2Fe-2S] cluster pocket. Glu491 provides a ligand contact to Mg(2+). The Proton acceptor role is filled by Ser517.

This sequence belongs to the IlvD/Edd family. In terms of assembly, homodimer. [2Fe-2S] cluster is required as a cofactor. Requires Mg(2+) as cofactor.

It carries out the reaction (2R)-2,3-dihydroxy-3-methylbutanoate = 3-methyl-2-oxobutanoate + H2O. The enzyme catalyses (2R,3R)-2,3-dihydroxy-3-methylpentanoate = (S)-3-methyl-2-oxopentanoate + H2O. The protein operates within amino-acid biosynthesis; L-isoleucine biosynthesis; L-isoleucine from 2-oxobutanoate: step 3/4. Its pathway is amino-acid biosynthesis; L-valine biosynthesis; L-valine from pyruvate: step 3/4. In terms of biological role, functions in the biosynthesis of branched-chain amino acids. Catalyzes the dehydration of (2R,3R)-2,3-dihydroxy-3-methylpentanoate (2,3-dihydroxy-3-methylvalerate) into 2-oxo-3-methylpentanoate (2-oxo-3-methylvalerate) and of (2R)-2,3-dihydroxy-3-methylbutanoate (2,3-dihydroxyisovalerate) into 2-oxo-3-methylbutanoate (2-oxoisovalerate), the penultimate precursor to L-isoleucine and L-valine, respectively. The protein is Dihydroxy-acid dehydratase 1 of Pseudoalteromonas translucida (strain TAC 125).